We begin with the raw amino-acid sequence, 254 residues long: Anti-sigma-M factor RsmA (254 aa).

Topologically, residues Met1–Arg112 are cytoplasmic. Residues Met113–Val133 form a helical membrane-spanning segment. Residues Asp134–Ala254 lie on the Extracellular side of the membrane.

In terms of assembly, interacts with ECF RNA polymerase sigma factor SigM; this should inhibit the interaction of SigM with the RNA polymerase catalytic core. Post-translationally, probably cleaved within the membrane by Rip1 near the cytoplasmic membrane interface.

Its subcellular location is the cell membrane. Its function is as follows. An anti-sigma factor for extracytoplasmic function (ECF) sigma factor SigM. ECF sigma factors are held in an inactive form by an anti-sigma factor until released by regulated intramembrane proteolysis (RIP). RIP occurs when an extracytoplasmic signal triggers a concerted proteolytic cascade to transmit information and elicit cellular responses. The membrane-spanning regulatory substrate protein is first cut extracytoplasmically (site-1 protease, S1P), then within the membrane itself (site-2 protease, S2P, Rip1), while cytoplasmic proteases finish degrading the regulatory protein, liberating the sigma factor. The polypeptide is Anti-sigma-M factor RsmA (rsmA) (Mycobacterium tuberculosis (strain ATCC 35801 / TMC 107 / Erdman)).